A 483-amino-acid polypeptide reads, in one-letter code: RNA-binding protein Nova-1 (483 aa).

The segment at 1–44 is disordered; it reads MMAAAPIQQNGTHTGVPIDLDPPDSRKRPLEAPPEAGSTKRTNT. The Bipartite nuclear localization signal motif lies at 27–43; that stretch reads KRPLEAPPEAGSTKRTN. 3 consecutive KH domains span residues 49-116, 147-213, and 397-464; these read QYFL…HGFI, IKQV…VELI, and KDVV…QYLI. The interval 395-479 is required for RNA binding; that stretch reads GSKDVVEIAV…YEQGVRAANP (85 aa).

In terms of assembly, interacts with PTBP2; the interaction is direct.

It is found in the nucleus. Functionally, functions to regulate alternative splicing in neurons by binding pre-mRNA in a sequence-specific manner to activate exon inclusion or exclusion. It binds specifically to the sequences 5'-YCAY-3' and regulates splicing in only a subset of regulated exons. Binding to an exonic 5'-YCAY-3' cluster changes the protein complexes assembled on pre-mRNA, blocking U1 snRNP binding and exon inclusion, whereas binding to an intronic 5'-YCAY-3' cluster enhances spliceosome assembly and exon inclusion. Binding to 5'-YCAY-3' clusters results in a local and asymmetric action to regulate spliceosome assembly and alternative splicing in neurons. Binding to an exonic 5'-YCAY-3' cluster changed the protein complexes assembled on pre-mRNA, blocking U1 snRNP (small nuclear ribonucleoprotein) binding and exon inclusion, whereas binding to an intronic 5'-YCAY-3' cluster enhanced spliceosome assembly and exon inclusion. With NOVA1, they perform unique biological functions in different brain areas and cell types. Autoregulates its own expression by acting as a splicing repressor. Acts to activate the inclusion of exon E3A in the glycine receptor alpha-2 chain and of exon E9 in gamma-aminobutyric-acid receptor gamma-2 subunit via a distal downstream UCAU-rich intronic splicing enhancer. Acts to regulate a novel glycine receptor alpha-2 chain splice variant (alpha-2N) in developing spinal cord. This Macaca fascicularis (Crab-eating macaque) protein is RNA-binding protein Nova-1 (NOVA1).